The sequence spans 888 residues: G-protein coupled receptor family C group 6 member A (888 aa).

A signal peptide spans 1 to 15 (MALLMTCFVIVFAAS). At 16-568 (QPCQTPDDLV…KEMEYLDSLA (553 aa)) the chain is on the extracellular side. Asn-251, Asn-322, Asn-532, and Asn-544 each carry an N-linked (GlcNAc...) asparagine glycan. A helical membrane pass occupies residues 569–589 (ILLLALSLLGILFVLAIGIIF). At 590–604 (TRNLNTPVVKSSGEL) the chain is on the cytoplasmic side. The helical transmembrane segment at 605 to 625 (MVRYVILFCHFLNFAGTGFFI) threads the bilayer. At 626–641 (REPQSFTCKTRQTLIC) the chain is on the extracellular side. The helical transmembrane segment at 642–662 (MSFTLCISYILMKSLKILLAF) threads the bilayer. The Cytoplasmic segment spans residues 663 to 676 (SSKLQNFLKCFYKP). A helical membrane pass occupies residues 677–697 (IPIIFTCTGIVVVCTLLIFAA). At 698–718 (PAVGQNVSLPRVIIFECEEGS) the chain is on the extracellular side. The helical transmembrane segment at 719 to 739 (ILAFGSMLGYAAILAFMCFIC) threads the bilayer. The Cytoplasmic portion of the chain corresponds to 740-754 (AFKGRKFPENYNEAK). Residues 755–775 (FITFGMLIYFIAWITFIPIYT) form a helical membrane-spanning segment. Topologically, residues 776–779 (FGKY) are extracellular. A helical transmembrane segment spans residues 780–800 (MLVVEIIIILISNYGICCMFF). The Cytoplasmic portion of the chain corresponds to 801–888 (PKCYVILSKQ…ALPPKRISSI (88 aa)).

Belongs to the G-protein coupled receptor 3 family. As to quaternary structure, homodimer; disulfide-linked.

Its subcellular location is the cell membrane. Its function is as follows. Receptor activated by multiple ligands, including osteocalcin (BGLAP), basic amino acids, and various cations. Activated by amino acids with a preference for basic amino acids such as L-Lys, L-Arg and L-ornithine but also by small and polar amino acids. The L-alpha amino acids respond is augmented by divalent cations Ca(2+) and Mg(2+). Seems to act through a G(q)/G(11) and G(i)-coupled pathway. Regulates testosterone production by acting as a ligand for uncarboxylated osteocalcin hormone: osteocalcin-binding at the surface of Leydig cells initiates a signaling response that promotes the expression of enzymes required for testosterone synthesis in a CREB-dependent manner. Mediates the non-genomic effects of androgens in multiple tissue. May coordinate nutritional and hormonal anabolic signals through the sensing of extracellular amino acids, osteocalcin, divalent ions and its responsiveness to anabolic steroids. This is G-protein coupled receptor family C group 6 member A (GPRC6A) from Bos taurus (Bovine).